A 402-amino-acid polypeptide reads, in one-letter code: DNA primase DnaG (402 aa).

Residues 165–243 enclose the Toprim domain; it reads PNLIIVEGRA…KIDFVARAPV (79 aa). Mg(2+)-binding residues include glutamate 171, aspartate 216, and aspartate 218.

This sequence belongs to the archaeal DnaG primase family. As to quaternary structure, forms a ternary complex with MCM helicase and DNA. Component of the archaeal exosome complex. Requires Mg(2+) as cofactor.

It carries out the reaction ssDNA + n NTP = ssDNA/pppN(pN)n-1 hybrid + (n-1) diphosphate.. Its function is as follows. RNA polymerase that catalyzes the synthesis of short RNA molecules used as primers for DNA polymerase during DNA replication. Also part of the exosome, which is a complex involved in RNA degradation. Acts as a poly(A)-binding protein that enhances the interaction between heteromeric, adenine-rich transcripts and the exosome. The chain is DNA primase DnaG from Saccharolobus islandicus (strain Y.N.15.51 / Yellowstone #2) (Sulfolobus islandicus).